A 541-amino-acid polypeptide reads, in one-letter code: Carotenoid 9,10(9',10')-cleavage dioxygenase 1 (541 aa).

Fe cation-binding residues include His222, His270, His336, and His526.

Belongs to the carotenoid oxygenase family. The cofactor is Fe(2+).

It carries out the reaction all-trans-zeaxanthin + 2 O2 = 4,9-dimethyldodeca-2,4,6,8,10-pentaenedial + 2 (3R)-hydroxy-beta-ionone. Functionally, cleaves a variety of carotenoids at the 9-10 and 9'-10' double bonds. Probably not involved in abscisic acid biosynthesis. This Pisum sativum (Garden pea) protein is Carotenoid 9,10(9',10')-cleavage dioxygenase 1 (CCD1).